Reading from the N-terminus, the 252-residue chain is GTP cyclohydrolase 1 type 2 homolog (252 aa).

Residues H63, H64, D101, H220, and E224 each contribute to the a divalent metal cation site.

It belongs to the GTP cyclohydrolase I type 2/NIF3 family. In terms of assembly, homohexamer.

The chain is GTP cyclohydrolase 1 type 2 homolog from Vibrio cholerae serotype O1 (strain ATCC 39315 / El Tor Inaba N16961).